Here is a 452-residue protein sequence, read N- to C-terminus: UPF0210 protein Dred_1672 (452 aa).

It belongs to the UPF0210 family. As to quaternary structure, homodimer.

The protein is UPF0210 protein Dred_1672 of Desulforamulus reducens (strain ATCC BAA-1160 / DSM 100696 / MI-1) (Desulfotomaculum reducens).